The primary structure comprises 86 residues: UPF0297 protein LSL_1110 (86 aa).

It belongs to the UPF0297 family.

This chain is UPF0297 protein LSL_1110, found in Ligilactobacillus salivarius (strain UCC118) (Lactobacillus salivarius).